Here is a 690-residue protein sequence, read N- to C-terminus: MSERILVNCALPYANGPLHLGHIAGAYLAADIFVRFNRLNGNEVLFVSGSDEYGTPITITAEKNKTSPQNVADIYHREHEQTFKNLDIVFDIFTRTTDPEHVKDVDEFFINLLNKNYLEKRYMVSPYCKSTGKFMPDRYIHGTCPYCGFNDARGDQCDECGRTLDPIELINPRCTSSNEEPLFIATEHFFLRLDLLSDELLNYLNTRENWKPNVINFTRSIINEGLRPRPITRDIDWGVPIPLNGFEGKRIYVWFEALIGYITGARVYSKNIKDDDYWKKFWLDKNVKSYYFIGKDNIPFHTIIWPAMLIAHGDYNLPYNVPANEYLRFEGAQFSKSRGIGYTVNEALSLVNKNYLRYYMASIMPETGDSSFSLNELVSRVNSELIDKYGNFIYRVLGFISNRKINIKKCEPDSIINEFKRFFDEYSESIKNIKIKNGLQIWLEAVTLANNYFNSEAPWNINDHERLNQVLFTSLKISMYLTAMLYPYVPSASSEILSSLGFKTVNYKFDDMLGFDDFRPLKGEPPFKKLEIADKKINIDLMVGTVKYVNDHPNADNLYVLGVHADRDITIVSNIKKYLTPENLQGRRILLIRNVKPATIRGIKSEAIIIAVQHGERIIIPEVNADDGSRMKIDGFDFNGDIISMDEIKRYKFIVDKNELVLEYNNSRFIITENGKPLKINAPDGSSIVL.

The 'HIGH' region motif lies at 12–22 (PYANGPLHLGH). Cys-144, Cys-147, Cys-157, and Cys-160 together coordinate Zn(2+). The 'KMSKS' region signature appears at 333–337 (QFSKS). Lys-336 provides a ligand contact to ATP. Residues 535-632 (KKINIDLMVG…VNADDGSRMK (98 aa)) enclose the tRNA-binding domain.

It belongs to the class-I aminoacyl-tRNA synthetase family. MetG type 1 subfamily. Homodimer. It depends on Zn(2+) as a cofactor.

It localises to the cytoplasm. The catalysed reaction is tRNA(Met) + L-methionine + ATP = L-methionyl-tRNA(Met) + AMP + diphosphate. In terms of biological role, is required not only for elongation of protein synthesis but also for the initiation of all mRNA translation through initiator tRNA(fMet) aminoacylation. The protein is Methionine--tRNA ligase of Picrophilus torridus (strain ATCC 700027 / DSM 9790 / JCM 10055 / NBRC 100828 / KAW 2/3).